The following is a 389-amino-acid chain: Exodeoxyribonuclease 7 large subunit (389 aa).

Belongs to the XseA family. In terms of assembly, heterooligomer composed of large and small subunits.

It localises to the cytoplasm. The enzyme catalyses Exonucleolytic cleavage in either 5'- to 3'- or 3'- to 5'-direction to yield nucleoside 5'-phosphates.. Its function is as follows. Bidirectionally degrades single-stranded DNA into large acid-insoluble oligonucleotides, which are then degraded further into small acid-soluble oligonucleotides. The polypeptide is Exodeoxyribonuclease 7 large subunit (Pseudothermotoga lettingae (strain ATCC BAA-301 / DSM 14385 / NBRC 107922 / TMO) (Thermotoga lettingae)).